The chain runs to 325 residues: Phospholipid phosphatase-related protein type 1 (325 aa).

A run of 3 helical transmembrane segments spans residues 11-31 (YSIIPCFIFVELVIMAGTVLL), 67-87 (FISPLVLYCVLAATPTAIIFI), and 127-147 (FIGVFAFGLFATDIFVNAGQV). Asn163 carries N-linked (GlcNAc...) asparagine glycosylation. Helical transmembrane passes span 201 to 218 (AALSIYSALYATMYITST), 230 to 247 (VLCLGTLCCAFLTGLNRV), and 257 to 277 (VIGGFILGTAIALFLGLCVVH). A glycan (N-linked (GlcNAc...) asparagine) is linked at Asn316.

It belongs to the PA-phosphatase related phosphoesterase family.

It is found in the cell membrane. Its subcellular location is the cell projection. The protein localises to the neuron projection. In terms of biological role, may play a role in neurite outgrowth and neurogenesis. This chain is Phospholipid phosphatase-related protein type 1, found in Xenopus tropicalis (Western clawed frog).